Reading from the N-terminus, the 202-residue chain is N-(5'-phosphoribosyl)anthranilate isomerase (202 aa).

This sequence belongs to the TrpF family.

The catalysed reaction is N-(5-phospho-beta-D-ribosyl)anthranilate = 1-(2-carboxyphenylamino)-1-deoxy-D-ribulose 5-phosphate. It participates in amino-acid biosynthesis; L-tryptophan biosynthesis; L-tryptophan from chorismate: step 3/5. The sequence is that of N-(5'-phosphoribosyl)anthranilate isomerase from Bacillus cereus (strain ATCC 14579 / DSM 31 / CCUG 7414 / JCM 2152 / NBRC 15305 / NCIMB 9373 / NCTC 2599 / NRRL B-3711).